We begin with the raw amino-acid sequence, 122 residues long: Large ribosomal subunit protein uL14 (122 aa).

This sequence belongs to the universal ribosomal protein uL14 family. As to quaternary structure, part of the 50S ribosomal subunit. Forms a cluster with proteins L3 and L19. In the 70S ribosome, L14 and L19 interact and together make contacts with the 16S rRNA in bridges B5 and B8.

In terms of biological role, binds to 23S rRNA. Forms part of two intersubunit bridges in the 70S ribosome. This is Large ribosomal subunit protein uL14 from Chlamydia pneumoniae (Chlamydophila pneumoniae).